A 141-amino-acid chain; its full sequence is Putative phosphatidylglycerol/phosphatidylinositol transfer protein DDB_G0278295 (141 aa).

Residues 1 to 19 (MRLLLALFFVLALVSPSFT) form the signal peptide. N-linked (GlcNAc...) asparagine glycans are attached at residues asparagine 82 and asparagine 104.

Belongs to the NPC2 family. Monomer.

Its function is as follows. Catalyzes the intermembrane transfer of phosphatidylglycerol and phosphatidylinositol. The polypeptide is Putative phosphatidylglycerol/phosphatidylinositol transfer protein DDB_G0278295 (Dictyostelium discoideum (Social amoeba)).